The following is a 457-amino-acid chain: Vasoactive intestinal polypeptide receptor (457 aa).

The first 19 residues, 1–19, serve as a signal peptide directing secretion; the sequence is MGLVEVVWWWRWRFGGGGG. Topologically, residues 20-141 are extracellular; sequence GLVVEVEVWW…KEQTAFYGTV (122 aa). Disulfide bonds link cysteine 51-cysteine 73, cysteine 64-cysteine 105, and cysteine 87-cysteine 122. Asparagine 59, asparagine 70, asparagine 100, and asparagine 104 each carry an N-linked (GlcNAc...) asparagine glycan. Residues 142-166 form a helical membrane-spanning segment; that stretch reads KTGYTIGHTLSLIALTAAMIILCLF. Residues 167-173 are Cytoplasmic-facing; that stretch reads RKLHCTR. A helical membrane pass occupies residues 174–193; sequence NYIHMHLFMSFIMRAIAVFI. Topologically, residues 194-215 are extracellular; sequence KDVTLFESGEPEHCFVSSVGCK. An intrachain disulfide couples cysteine 214 to cysteine 284. Residues 216–239 traverse the membrane as a helical segment; it reads AMMVFFQYCVMANFFWLLVEGLYL. Residues 240 to 253 lie on the Cytoplasmic side of the membrane; sequence HTLLVISFFSERKY. Residues 254–275 traverse the membrane as a helical segment; it reads FWWYILIGWGAPSVFITAWTVV. At 276–292 the chain is on the extracellular side; sequence RIYFFNVGCWEEIIESP. A helical membrane pass occupies residues 293 to 316; sequence IWWIIKTPILVSILVNFILFICII. Over 317-341 the chain is Cytoplasmic; the sequence is RILVQKLHSPDVGHNETSQYSRLAK. The chain crosses the membrane as a helical span at residues 342-361; it reads STLLLIPLFGIHYIMFAFFP. The Extracellular portion of the chain corresponds to 362–373; sequence DNFKAQVKLVFE. A helical membrane pass occupies residues 374–393; that stretch reads LVVGSFQGFVVAVLYCFLNG. Topologically, residues 394–457 are cytoplasmic; the sequence is EVQAELKRKW…SSFQAEFSLV (64 aa).

It belongs to the G-protein coupled receptor 2 family. Expressed in pituitary, hypothalamus, small intestine and ovarian follicles.

The protein resides in the cell membrane. Functionally, this is a receptor for VIP. The activity of this receptor is mediated by G proteins which activate adenylyl cyclase. The polypeptide is Vasoactive intestinal polypeptide receptor (VIPR1) (Meleagris gallopavo (Wild turkey)).